The sequence spans 90 residues: Large ribosomal subunit protein eL34 (90 aa).

The tract at residues 38–65 is disordered; that stretch reads ARCGRPLGGVPRGRPPRVRRLSKTAKRP. The span at 51–62 shows a compositional bias: basic residues; sequence RPPRVRRLSKTA.

This sequence belongs to the eukaryotic ribosomal protein eL34 family.

The chain is Large ribosomal subunit protein eL34 (rpl34e) from Aeropyrum pernix (strain ATCC 700893 / DSM 11879 / JCM 9820 / NBRC 100138 / K1).